We begin with the raw amino-acid sequence, 91 residues long: Small ribosomal subunit protein uS19 (91 aa).

The protein belongs to the universal ribosomal protein uS19 family.

Its function is as follows. Protein S19 forms a complex with S13 that binds strongly to the 16S ribosomal RNA. In Azotobacter vinelandii (strain DJ / ATCC BAA-1303), this protein is Small ribosomal subunit protein uS19.